A 247-amino-acid chain; its full sequence is Membrane-spanning 4-domains subfamily A member 6D (247 aa).

Residues 1 to 46 (MIPQVVTSETVTVISPNGISFPQTDKPQPSHQSQDSLKKHLKAEIK) lie on the Cytoplasmic side of the membrane. A helical transmembrane segment spans residues 47–67 (VMAAIQIMCAVMVLSLGIILA). Residues 68-80 (SVPSNLHFTSVFS) are Extracellular-facing. A helical membrane pass occupies residues 81–101 (ILLESGYPFVGALFFAISGIL). The Cytoplasmic portion of the chain corresponds to 102-121 (SIVTEKKMTKPLVHSSLALS). Residues 122 to 142 (ILSVLSALTGIAILSVSLAAL) traverse the membrane as a helical segment. Over 143–180 (EPALQQCKLAFTQLDTTQDAYHFFSPEPLNSCFVAKAA) the chain is Extracellular. A helical membrane pass occupies residues 181–201 (LTGVFSLMLISSVLELGLAVL). Over 202–247 (TATLWWKQSSSAFSGNVIFLSQNSKNKSSVSSESLCNPTYENILTS) the chain is Cytoplasmic. Position 235 is a phosphoserine (S235).

Belongs to the MS4A family. Expressed in thymus, spleen, intestine, colon, testis, heart, liver, brain, kidney, peripheral lymph node and bone marrow.

Its subcellular location is the membrane. May be involved in signal transduction as a component of a multimeric receptor complex. The protein is Membrane-spanning 4-domains subfamily A member 6D (Ms4a6d) of Mus musculus (Mouse).